Consider the following 167-residue polypeptide: Peptide deformylase (167 aa).

Fe cation contacts are provided by Cys91 and His133. Residue Glu134 is part of the active site. His137 contacts Fe cation.

This sequence belongs to the polypeptide deformylase family. The cofactor is Fe(2+).

It catalyses the reaction N-terminal N-formyl-L-methionyl-[peptide] + H2O = N-terminal L-methionyl-[peptide] + formate. In terms of biological role, removes the formyl group from the N-terminal Met of newly synthesized proteins. Requires at least a dipeptide for an efficient rate of reaction. N-terminal L-methionine is a prerequisite for activity but the enzyme has broad specificity at other positions. The chain is Peptide deformylase from Baumannia cicadellinicola subsp. Homalodisca coagulata.